The following is a 218-amino-acid chain: Phosphoribosylformylglycinamidine synthase subunit PurQ (218 aa).

The 217-residue stretch at 2–218 (RVGVIRFPGS…FFRGILKFRG (217 aa)) folds into the Glutamine amidotransferase type-1 domain. Cysteine 85 functions as the Nucleophile in the catalytic mechanism. Residues histidine 192 and glutamate 194 contribute to the active site.

In terms of assembly, part of the FGAM synthase complex composed of 1 PurL, 1 PurQ and 2 PurS subunits.

The protein localises to the cytoplasm. It carries out the reaction N(2)-formyl-N(1)-(5-phospho-beta-D-ribosyl)glycinamide + L-glutamine + ATP + H2O = 2-formamido-N(1)-(5-O-phospho-beta-D-ribosyl)acetamidine + L-glutamate + ADP + phosphate + H(+). The enzyme catalyses L-glutamine + H2O = L-glutamate + NH4(+). The protein operates within purine metabolism; IMP biosynthesis via de novo pathway; 5-amino-1-(5-phospho-D-ribosyl)imidazole from N(2)-formyl-N(1)-(5-phospho-D-ribosyl)glycinamide: step 1/2. Functionally, part of the phosphoribosylformylglycinamidine synthase complex involved in the purines biosynthetic pathway. Catalyzes the ATP-dependent conversion of formylglycinamide ribonucleotide (FGAR) and glutamine to yield formylglycinamidine ribonucleotide (FGAM) and glutamate. The FGAM synthase complex is composed of three subunits. PurQ produces an ammonia molecule by converting glutamine to glutamate. PurL transfers the ammonia molecule to FGAR to form FGAM in an ATP-dependent manner. PurS interacts with PurQ and PurL and is thought to assist in the transfer of the ammonia molecule from PurQ to PurL. This Methanothermobacter thermautotrophicus (strain ATCC 29096 / DSM 1053 / JCM 10044 / NBRC 100330 / Delta H) (Methanobacterium thermoautotrophicum) protein is Phosphoribosylformylglycinamidine synthase subunit PurQ.